Consider the following 461-residue polypeptide: MWQLTSLLLFVATWGISGTPAPLDSVFSSSERAHQVLRIRKRANSFLEELRHSSLERECIEEICDFEEAKEIFQNVDDTLAFWSKHVDGDQCLVLPLEHPCASLCCGHGTCIDGIGSFSCDCRSGWEGRFCQREVSFLNCSLDNGGCTHYCLEEVGWRRCSCAPGYKLGDDLLQCHPAVKFPCGRPWKRMEKKRSHLKRDTEDQEDQVDPRLIDGKMTRRGDSPWQVVLLDSKKKLACGAVLIHPSWVLTAAHCMDESKKLLVRLGEYDLRRWEKWELDLDIKEVFVHPNYSKSTTDNDIALLHLAQPATLSQTIVPICLPDSGLAERELNQAGQETLVTGWGYHSSREKEAKRNRTFVLNFIKIPVVPHNECSEVMSNMVSENMLCAGILGDRQDACEGDSGGPMVASFHGTWFLVGLVSWGEGCGLLHNYGVYTKVSRYLDWIHGHIRDKEAPQKSWAP.

The signal sequence occupies residues 1–18; it reads MWQLTSLLLFVATWGISG. The O-linked (GalNAc...) threonine glycan is linked to Thr-19. Positions 19–42 are excised as a propeptide; that stretch reads TPAPLDSVFSSSERAHQVLRIRKR. The Gla domain occupies 43–88; that stretch reads ANSFLEELRHSSLERECIEEICDFEEAKEIFQNVDDTLAFWSKHVD. 4-carboxyglutamate is present on residues Glu-48, Glu-49, Glu-56, Glu-58, Glu-61, Glu-62, Glu-67, Glu-68, and Glu-71. An intrachain disulfide couples Cys-59 to Cys-64. Cystine bridges form between Cys-92/Cys-111, Cys-101/Cys-106, Cys-105/Cys-120, and Cys-122/Cys-131. EGF-like domains follow at residues 97-132 and 136-176; these read LEHP…RFCQ and SFLN…LQCH. The residue at position 113 (Asp-113) is a (3R)-3-hydroxyaspartate. Residue Asn-139 is glycosylated (N-linked (GlcNAc...) asparagine). Disulfide bonds link Cys-140–Cys-151, Cys-147–Cys-160, Cys-162–Cys-175, Cys-183–Cys-319, and Cys-238–Cys-254. The Peptidase S1 domain maps to 212–450; it reads LIDGKMTRRG…YLDWIHGHIR (239 aa). His-253 serves as the catalytic Charge relay system. Asn-290 carries N-linked (GlcNAc...) asparagine glycosylation. Asp-299 functions as the Charge relay system in the catalytic mechanism. At Ser-347 the chain carries Phosphoserine; by FAM20C. Residue Asn-355 is glycosylated (N-linked (GlcNAc...) asparagine). An N-linked (GlcNAc...) asparagine; atypical; partial glycan is attached at Asn-371. 2 cysteine pairs are disulfide-bonded: Cys-373–Cys-387 and Cys-398–Cys-426. Ser-402 serves as the catalytic Charge relay system.

This sequence belongs to the peptidase S1 family. Synthesized as a single chain precursor, which is cleaved into a light chain and a heavy chain held together by a disulfide bond. The enzyme is then activated by thrombin, which cleaves a tetradecapeptide from the amino end of the heavy chain; this reaction, which occurs at the surface of endothelial cells, is strongly promoted by thrombomodulin. Interacts (activated) with iripin-8, a serine protease inhibitor from Ixodes ricinus saliva. Post-translationally, the vitamin K-dependent, enzymatic carboxylation of some Glu residues allows the modified protein to bind calcium. N- and O-glycosylated. Partial (70%) N-glycosylation of Asn-371 with an atypical N-X-C site produces a higher molecular weight form referred to as alpha. The lower molecular weight form, not N-glycosylated at Asn-371, is beta. O-glycosylated with core 1 or possibly core 8 glycans. In terms of processing, the iron and 2-oxoglutarate dependent 3-hydroxylation of aspartate and asparagine is (R) stereospecific within EGF domains. Post-translationally, may be phosphorylated on a Ser or Thr in a region (AA 25-30) of the propeptide. In terms of tissue distribution, plasma; synthesized in the liver.

Its subcellular location is the secreted. It localises to the golgi apparatus. The protein resides in the endoplasmic reticulum. The catalysed reaction is Degradation of blood coagulation factors Va and VIIIa.. Its function is as follows. Protein C is a vitamin K-dependent serine protease that regulates blood coagulation by inactivating factors Va and VIIIa in the presence of calcium ions and phospholipids. Exerts a protective effect on the endothelial cell barrier function. This Homo sapiens (Human) protein is Vitamin K-dependent protein C (PROC).